The sequence spans 86 residues: MNSKIFAVLLLLAFLSCVLSDQYCPKSSITACKKMNIRNDCCKDDDCTGGSWCCATPCGNICKYPTDRPGGKRAAGGKSCKTGYVY.

Residues 1 to 20 (MNSKIFAVLLLLAFLSCVLS) form the signal peptide. In terms of domain architecture, WAP spans 21–66 (DQYCPKSSITACKKMNIRNDCCKDDDCTGGSWCCATPCGNICKYPT). Disulfide bonds link cysteine 24-cysteine 54, cysteine 32-cysteine 58, cysteine 41-cysteine 53, cysteine 42-cysteine 80, and cysteine 47-cysteine 62.

This sequence belongs to the venom protein 11 family. 01 (wap-1) subfamily. Contains 5 disulfide bonds. In terms of tissue distribution, expressed by the venom gland.

The protein resides in the secreted. Functionally, has antibacterial activity. The chain is U15-lycotoxin-Ls1c from Lycosa singoriensis (Wolf spider).